The following is a 499-amino-acid chain: Lysine--tRNA ligase (499 aa).

Mg(2+) is bound by residues glutamate 403 and glutamate 410.

Belongs to the class-II aminoacyl-tRNA synthetase family. Homodimer. Requires Mg(2+) as cofactor.

Its subcellular location is the cytoplasm. The enzyme catalyses tRNA(Lys) + L-lysine + ATP = L-lysyl-tRNA(Lys) + AMP + diphosphate. This is Lysine--tRNA ligase from Campylobacter hominis (strain ATCC BAA-381 / DSM 21671 / CCUG 45161 / LMG 19568 / NCTC 13146 / CH001A).